Here is a 217-residue protein sequence, read N- to C-terminus: Ufm1-specific protease 1 (217 aa).

Active-site residues include C53, D175, and H177.

This sequence belongs to the peptidase C78 family. Widely expressed. Expressed at higher level in brain, heart, kidney and skeletal muscle.

The protein localises to the cytoplasm. It localises to the cytosol. Its function is as follows. Thiol-dependent isopeptidase that specifically mediate the processing of UFM1 precursors as well as the deconjugation of UFM1 from target proteins. Mainly responsible for the maturation of the UFM1 precursor, a prerequisite for conjugation reactions. The sequence is that of Ufm1-specific protease 1 from Mus musculus (Mouse).